The primary structure comprises 178 residues: Ribose 1,5-bisphosphate phosphokinase PhnN (178 aa).

9–16 lines the ATP pocket; that stretch reads GPSGSGKD.

This sequence belongs to the ribose 1,5-bisphosphokinase family.

It catalyses the reaction alpha-D-ribose 1,5-bisphosphate + ATP = 5-phospho-alpha-D-ribose 1-diphosphate + ADP. The protein operates within metabolic intermediate biosynthesis; 5-phospho-alpha-D-ribose 1-diphosphate biosynthesis; 5-phospho-alpha-D-ribose 1-diphosphate from D-ribose 5-phosphate (route II): step 3/3. Catalyzes the phosphorylation of ribose 1,5-bisphosphate to 5-phospho-D-ribosyl alpha-1-diphosphate (PRPP). The chain is Ribose 1,5-bisphosphate phosphokinase PhnN from Pantoea vagans (strain C9-1) (Pantoea agglomerans (strain C9-1)).